The chain runs to 664 residues: Macrolide export ATP-binding/permease protein MacB (664 aa).

The region spanning 8-246 (LEVHNLVREF…ELNKDPDAAP (239 aa)) is the ABC transporter domain. 44–51 (GQSGSGKS) provides a ligand contact to ATP. 4 consecutive transmembrane segments (helical) span residues 287–307 (FLTM…VALG), 543–563 (IAVI…LVSV), 587–607 (FLIE…LLSL), and 629–649 (SIVA…FLPA).

The protein belongs to the ABC transporter superfamily. Macrolide exporter (TC 3.A.1.122) family. In terms of assembly, homodimer. Part of the tripartite efflux system MacAB-TolC, which is composed of an inner membrane transporter, MacB, a periplasmic membrane fusion protein, MacA, and an outer membrane component, TolC. The complex forms a large protein conduit and can translocate molecules across both the inner and outer membranes. Interacts with MacA.

Its subcellular location is the cell inner membrane. Part of the tripartite efflux system MacAB-TolC. MacB is a non-canonical ABC transporter that contains transmembrane domains (TMD), which form a pore in the inner membrane, and an ATP-binding domain (NBD), which is responsible for energy generation. Confers resistance against macrolides. This chain is Macrolide export ATP-binding/permease protein MacB, found in Acinetobacter baylyi (strain ATCC 33305 / BD413 / ADP1).